A 212-amino-acid polypeptide reads, in one-letter code: Inactive ribonuclease-like protein 10 (212 aa).

An N-terminal signal peptide occupies residues 1-24 (MKVTLVHLLFMMLLLLLGLGVGLG). Residues Asn129 and Asn204 are each glycosylated (N-linked (GlcNAc...) asparagine).

Belongs to the pancreatic ribonuclease family. Post-translationally, the N-terminus is blocked. Glycosylated. Male-specific expression in proximal caput of the epididymis.

The protein localises to the secreted. Secreted proximal epididymal protein required for post-testicular sperm maturation and male fertility. May be involved in sperm adhesion to the egg zona pellucida. Does not have ribonuclease activity. The chain is Inactive ribonuclease-like protein 10 (Rnase10) from Rattus norvegicus (Rat).